Here is a 143-residue protein sequence, read N- to C-terminus: Small ribosomal subunit protein uS12 (143 aa).

Hydroxyproline is present on Pro62.

The protein belongs to the universal ribosomal protein uS12 family. In terms of assembly, component of the 40S small ribosomal subunit.

Its subcellular location is the cytoplasm. The protein localises to the cytosol. It localises to the rough endoplasmic reticulum. This chain is Small ribosomal subunit protein uS12 (RPS23), found in Ciona intestinalis (Transparent sea squirt).